A 107-amino-acid polypeptide reads, in one-letter code: MINIDPPSGDYPASGGSSTHYIVSESESRLAFKVKSSNNESYRVRPVYGFVDAKGKAKLEVNRLAGPAKEDKLVIQYAEVPADETDPKAPFAAGAQQGEVVVKMVAS.

An MSP domain is found at 1–107; that stretch reads MINIDPPSGD…GEVVVKMVAS (107 aa).

Expressed at higher level in testis.

This is Sperm-specific class P protein 31 (ssp-31) from Caenorhabditis elegans.